The following is a 342-amino-acid chain: Galactose mutarotase (342 aa).

Serine 14 carries the phosphoserine modification. Residues asparagine 81–arginine 82 and histidine 107 contribute to the beta-D-galactose site. Phosphoserine is present on serine 124. Catalysis depends on histidine 176, which acts as the Proton donor. Beta-D-galactose is bound by residues histidine 176–tyrosine 178, aspartate 243, glutamine 279, and glutamate 307. Glutamate 307 functions as the Proton acceptor in the catalytic mechanism.

This sequence belongs to the aldose epimerase family. Monomer.

It localises to the cytoplasm. The catalysed reaction is alpha-D-galactose = beta-D-galactose. It catalyses the reaction alpha-D-glucose = beta-D-glucose. Its pathway is carbohydrate metabolism; hexose metabolism. The protein operates within carbohydrate metabolism; galactose metabolism. Its function is as follows. Mutarotase that catalyzes the interconversion of beta-D-galactose and alpha-D-galactose during galactose metabolism. Beta-D-galactose is metabolized in the liver into glucose 1-phosphate, the primary metabolic fuel, by the action of four enzymes that constitute the Leloir pathway: GALM, GALK1 (galactokinase), GALT (galactose-1-phosphate uridylyltransferase) and GALE (UDP-galactose-4'-epimerase). Involved in the maintenance of the equilibrium between the beta- and alpha-anomers of galactose, therefore ensuring a sufficient supply of the alpha-anomer for GALK1. Also active on D-glucose although shows a preference for galactose over glucose. The sequence is that of Galactose mutarotase (Galm) from Rattus norvegicus (Rat).